We begin with the raw amino-acid sequence, 427 residues long: uncharacterized protein (427 aa).

It belongs to the CAF1 family.

This is an uncharacterized protein from Schizosaccharomyces pombe (strain 972 / ATCC 24843) (Fission yeast).